The primary structure comprises 411 residues: Translation initiation factor 2 subunit gamma (411 aa).

One can recognise a tr-type G domain in the interval 9-201; sequence QPSVNIGMVG…AIEKYIPSPK (193 aa). Residues 18–25 form a G1 region; it reads GHVDHGKS. Positions 21, 25, 46, and 48 each coordinate Mg(2+). 21-26 serves as a coordination point for GTP; it reads DHGKST. The tract at residues 46–50 is G2; it reads GISIK. Residues 88 to 91 are G3; the sequence is DAPG. Residues 144 to 147 and 179 to 181 each bind GTP; these read NKID and SAY. The tract at residues 144 to 147 is G4; that stretch reads NKID. The tract at residues 179–181 is G5; sequence SAY.

The protein belongs to the TRAFAC class translation factor GTPase superfamily. Classic translation factor GTPase family. EIF2G subfamily. Heterotrimer composed of an alpha, a beta and a gamma chain. Mg(2+) is required as a cofactor.

The catalysed reaction is GTP + H2O = GDP + phosphate + H(+). Functionally, eIF-2 functions in the early steps of protein synthesis by forming a ternary complex with GTP and initiator tRNA. In Thermoplasma acidophilum (strain ATCC 25905 / DSM 1728 / JCM 9062 / NBRC 15155 / AMRC-C165), this protein is Translation initiation factor 2 subunit gamma.